The primary structure comprises 485 residues: Glutamyl-tRNA(Gln) amidotransferase subunit A (485 aa).

Active-site charge relay system residues include lysine 76 and serine 151. The active-site Acyl-ester intermediate is serine 175.

The protein belongs to the amidase family. GatA subfamily. Heterotrimer of A, B and C subunits.

The enzyme catalyses L-glutamyl-tRNA(Gln) + L-glutamine + ATP + H2O = L-glutaminyl-tRNA(Gln) + L-glutamate + ADP + phosphate + H(+). Its function is as follows. Allows the formation of correctly charged Gln-tRNA(Gln) through the transamidation of misacylated Glu-tRNA(Gln) in organisms which lack glutaminyl-tRNA synthetase. The reaction takes place in the presence of glutamine and ATP through an activated gamma-phospho-Glu-tRNA(Gln). The sequence is that of Glutamyl-tRNA(Gln) amidotransferase subunit A from Pelagibacter ubique (strain HTCC1062).